Here is a 984-residue protein sequence, read N- to C-terminus: Shutoff protein (984 aa).

The interval Gly131–Pro231 is disordered. The span at Asp137 to Pro147 shows a compositional bias: acidic residues. A compositionally biased stretch (basic and acidic residues) spans Glu148–Asp159. A compositionally biased stretch (acidic residues) spans Val176–Ser186. The segment covering Thr190–Ala202 has biased composition (polar residues). Over residues Asp205–Gly216 the composition is skewed to basic and acidic residues. The interval Leu411–Leu476 is binding to host EIF4G. An RRM domain is found at Arg479–Ala597. Disordered stretches follow at residues Gly810–Ala853 and Lys876–Glu984. At Tyr812 the chain carries Phosphotyrosine; by host. A compositionally biased stretch (basic residues) spans Ala913–Thr923. A compositionally biased stretch (low complexity) spans Arg945–Ala958.

Belongs to the adenoviridae shutoff protein family. In terms of assembly, monomer. Interacts with hexon protein; this interaction allows chaperoning and trimerization of hexon proteins. Interacts (via N-terminus) with host initiation factor EIF4G (via C-terminus). Interacts (via RRM domain) with viral mRNAs that contain the tripartite leader; this interaction allows ribosome shunting and expression of viral late mRNAs. Post-translationally, might be cleaved by the viral protease. In terms of processing, phosphorylated. Tyrosine phosphorylation enhances preferential binding to tripartite leader mRNAs and allows ribosome shunting. Methylated. Asymmetric dimethylation by host PRMT1 of the Arg/Gly-rich region may regulate shutoff protein binding to hexon and promote the capsid assembly in the nucleus.

It localises to the host cytoplasm. Functionally, protein that inhibits host translation while promoting late viral translation by ribosome shunting. Blocks host cap-dependent translation by binding to eIF4G, displacing MKNK1 from cap initiation complexes and preventing EIF4E phosphorylation. Binds to the tripartite leader sequence of viral late mRNAs and recruits host eIF4G, PABPC1/poly-A binding protein and 40S ribosomes subunits on viral mRNAs, allowing ribosome shunting and efficient translation of late viral mRNAs even though conventional translation via ribosome scanning from the cap has been shut off in the host cell. During assembly, acts as a chaperone protein that helps hexon proteins assembly into trimers. This Galliformes (FAdV-1) protein is Shutoff protein.